The primary structure comprises 573 residues: Potassium-transporting ATPase potassium-binding subunit (573 aa).

10 consecutive transmembrane segments (helical) span residues 6 to 26 (ILFA…GSYI), 66 to 86 (FFSL…ILLL), 135 to 155 (ALAV…IALI), 177 to 197 (VFWI…FQGV), 257 to 277 (IQMV…GKWV), 283 to 303 (GWLI…VMTI), 382 to 402 (IFGG…LAVF), 428 to 448 (MFAL…AAVI), 493 to 513 (ITIA…VIML), and 537 to 557 (FIFA…TIFP).

Belongs to the KdpA family. The system is composed of three essential subunits: KdpA, KdpB and KdpC.

It localises to the cell inner membrane. Part of the high-affinity ATP-driven potassium transport (or Kdp) system, which catalyzes the hydrolysis of ATP coupled with the electrogenic transport of potassium into the cytoplasm. This subunit binds the periplasmic potassium ions and delivers the ions to the membrane domain of KdpB through an intramembrane tunnel. The polypeptide is Potassium-transporting ATPase potassium-binding subunit (Francisella tularensis subsp. tularensis (strain WY96-3418)).